Consider the following 1494-residue polypeptide: Serine/threonine-protein kinase VPS15 (1494 aa).

G2 is lipidated: N-myristoyl glycine. The Protein kinase domain occupies 27-307; the sequence is LVLKEVLGRG…VFPNYFSPFL (281 aa). Residues 33 to 41 and K54 contribute to the ATP site; that span reads LGRGRFLKS. D149 (proton acceptor) is an active-site residue. 7 HEAT repeats span residues 383–421, 480–517, 524–562, 610–646, 648–685, 687–724, and 727–764; these read NSKDEIFYSISDALKKNRHPFLKKITMDDLGTLMSLYDS, DRLQRVLPYVVALLSDPTAIVRCAAMETLCDILPLVRD, KIFPEYIFPMLSMLPEDTEESVRICYASNIAKLALTAYG, KTIAEVVQELVMGPKQTPNVRRALLQDIGELCFFFGQ, QSNDFLLPILPAFLNDRDEQLRSVFFEKIVYVCFFVGQ, SVEEYLLPYIDQALSDQTEAVIVNALECLSTLCKSSFL, and RALLQMIECVYPLLCYPSQWVRRAVVTFIAASSECLGA. Disordered stretches follow at residues 859–903 and 1037–1064; these read QSVE…TVEL and SASVTSEDASSPADLVGEPSLSRTSVPD. Positions 1037-1047 are enriched in low complexity; that stretch reads SASVTSEDASS. WD repeat units follow at residues 1079 to 1118, 1127 to 1166, 1184 to 1226, 1231 to 1270, 1276 to 1323, 1371 to 1409, and 1466 to 1494; these read EHRSAVNDIATSSDHSFFVSASDDSTVKVWDSRKLEKDIS, LEGSRGMCTTMLRNSTQVVVGASDGVIHMFSIDHISRGLG, KEGA…DAWT, PEEGYVSSLVTSPCGNWFVSGSSRGVLTLWDLRFRVPVNS, ICPI…CHQV, PRLPGIRSLLPLPGGDLLTGGTDLKIRRWDYSSPERSYC, and DSVQSLASVKLNQRLLISSSRDGAIKVWK.

The protein belongs to the protein kinase superfamily. Ser/Thr protein kinase family. As to quaternary structure, interacts with VPS34. Component of a complex made of VPS38/USL1 and PI3K main subunits such as VPS15, ATG6/VPS30 and VPS34. Post-translationally, autophosphorylated. As to expression, mainly expressed in anthers, pollen grains and pollen tubes, and, to a lower extent, in other tissues and organs including seedlings, roots, stems, leaves, flowers, pitils and siliques.

It is found in the cytoplasm. The protein localises to the golgi apparatus. Its subcellular location is the trans-Golgi network membrane. The protein resides in the endosome membrane. The enzyme catalyses L-seryl-[protein] + ATP = O-phospho-L-seryl-[protein] + ADP + H(+). The catalysed reaction is L-threonyl-[protein] + ATP = O-phospho-L-threonyl-[protein] + ADP + H(+). In terms of biological role, serine/threonine-protein kinase required for cytoplasm to vacuole transport (Cvt) and autophagy as a part of the autophagy-specific VPS34 PI3-kinase complex I. Required for pollen development and germination, probably via the modulation of phosphatidylinositol 3-phosphate (PI3P) formation and vacuolar organization. The polypeptide is Serine/threonine-protein kinase VPS15 (Arabidopsis thaliana (Mouse-ear cress)).